The chain runs to 240 residues: tRNA (guanine-N(7)-)-methyltransferase (240 aa).

The segment covering 1-10 has biased composition (polar residues); that stretch reads MTESQDTPIT. Positions 1 to 20 are disordered; that stretch reads MTESQDTPITTDGEARPHRR. Residues Glu70, Glu95, Asp122, and Asp145 each coordinate S-adenosyl-L-methionine. Asp145 is a catalytic residue. Residues Lys149, Asp181, and 218 to 221 contribute to the substrate site; that span reads TKFE.

Belongs to the class I-like SAM-binding methyltransferase superfamily. TrmB family.

It catalyses the reaction guanosine(46) in tRNA + S-adenosyl-L-methionine = N(7)-methylguanosine(46) in tRNA + S-adenosyl-L-homocysteine. Its pathway is tRNA modification; N(7)-methylguanine-tRNA biosynthesis. In terms of biological role, catalyzes the formation of N(7)-methylguanine at position 46 (m7G46) in tRNA. This Pseudomonas putida (strain W619) protein is tRNA (guanine-N(7)-)-methyltransferase.